We begin with the raw amino-acid sequence, 382 residues long: MVSQKETVCVTGASGFIGSWLVMRLLERGYFVRATVRDPGNLKKVQHLLDLPNAKTLLTLWKADLSEEGSYDDAINGCDGVFHVATPMDFESKDPENEVIKPTVNGMLGIMKACVKAKTVRRFVFTSSAGTVNVEEHQKNVYDENDWSDLEFIMSKKMTGWMYFVSKTLAEKAAWDFAEEKGLDFISIIPTLVVGPFITTSMPPSLITALSPITRNEAHYSIIRQGQYVHLDDLCNAHIFLYEQAAAKGRYICSSHDATILTISKFLRPKYPEYNVPSTFEGVDENLKSIEFSSKKLTDMGFNFKYSLEEMFIESIETCRQKGFLPVSLSYQSISEIKTKNENIDVKTGDGLTDGMKPCNKTETGITGERTDAPMLAQQMCA.

Residues lysine 44 and tyrosine 163 each contribute to the NADP(+) site.

It belongs to the NAD(P)-dependent epimerase/dehydratase family. Dihydroflavonol-4-reductase subfamily.

It catalyses the reaction a (2R,3S,4S)-leucoanthocyanidin + NADP(+) = a (2R,3R)-dihydroflavonol + NADPH + H(+). The enzyme catalyses (2S)-flavan-4-ol + NADP(+) = (2S)-flavanone + NADPH + H(+). It participates in pigment biosynthesis; anthocyanin biosynthesis. In terms of biological role, bifunctional enzyme involved in flavonoid metabolism. In Arabidopsis thaliana (Mouse-ear cress), this protein is Dihydroflavonol 4-reductase (DFRA).